Consider the following 1137-residue polypeptide: AP-4 complex subunit epsilon-1 (1137 aa).

2 positions are modified to phosphoserine: S700 and S857. The tract at residues 727–1137 (SGALPVPQES…YQCQKVMEGS (411 aa)) is interaction with TEPSIN.

It belongs to the adaptor complexes large subunit family. Adaptor protein complex 4 (AP-4) is a heterotetramer composed of two large adaptins (epsilon-type subunit AP4E1 and beta-type subunit AP4B1), a medium adaptin (mu-type subunit AP4M1) and a small adaptin (sigma-type AP4S1). Interacts with TEPSIN. Interacts with GRIA2; probably indirect it mediates the somatodendritic localization of GRIA2 in neurons. As to expression, widely expressed.

The protein localises to the golgi apparatus. Its subcellular location is the trans-Golgi network membrane. Its function is as follows. Component of the adaptor protein complex 4 (AP-4). Adaptor protein complexes are vesicle coat components involved both in vesicle formation and cargo selection. They control the vesicular transport of proteins in different trafficking pathways. AP-4 forms a non clathrin-associated coat on vesicles departing the trans-Golgi network (TGN) and may be involved in the targeting of proteins from the trans-Golgi network (TGN) to the endosomal-lysosomal system. It is also involved in protein sorting to the basolateral membrane in epithelial cells and the proper asymmetric localization of somatodendritic proteins in neurons. AP-4 is involved in the recognition and binding of tyrosine-based sorting signals found in the cytoplasmic part of cargos, but may also recognize other types of sorting signal. In Homo sapiens (Human), this protein is AP-4 complex subunit epsilon-1.